We begin with the raw amino-acid sequence, 131 residues long: M-zodatoxin-Lt8o (131 aa).

The N-terminal stretch at 1–20 is a signal peptide; it reads MKYFVVALALVAAFACIAES. A propeptide spanning residues 21-60 is cleaved from the precursor; it reads KPAESEHELAEVEEENELADLEDAVWLEHLADLSDLEEAR.

Belongs to the cationic peptide 06 (cytoinsectotoxin) family. In terms of tissue distribution, expressed by the venom gland.

The protein resides in the secreted. Its function is as follows. Insecticidal, cytolytic and antimicrobial peptide. Forms voltage-dependent, ion-permeable channels in membranes. At high concentration causes cell membrane lysis. This is M-zodatoxin-Lt8o (cit 1-14) from Lachesana tarabaevi (Spider).